Here is a 185-residue protein sequence, read N- to C-terminus: uncharacterized protein (185 aa).

Residues 39–177 (LWHASAGVLV…SWPFVPDSRA (139 aa)) form the Nudix hydrolase domain. Positions 77-99 (GGVVDPGETPQETAIREVGEELG) match the Nudix box motif. Mg(2+) contacts are provided by glutamate 93 and glutamate 97.

This sequence belongs to the Nudix hydrolase family. Mg(2+) serves as cofactor.

This is an uncharacterized protein from Rhodococcus erythropolis (Arthrobacter picolinophilus).